A 257-amino-acid chain; its full sequence is tRNA (cytidine/uridine/adenosine-2'-O-)-methyltransferase TrmJ (257 aa).

S-adenosyl-L-methionine-binding positions include 79–82, 115–117, isoleucine 135, and 142–144; these read TSAR, GRE, and GSL.

Belongs to the class IV-like SAM-binding methyltransferase superfamily. RNA methyltransferase TrmH family. As to quaternary structure, homodimer.

It is found in the cytoplasm. It carries out the reaction cytidine(32) in tRNA + S-adenosyl-L-methionine = 2'-O-methylcytidine(32) in tRNA + S-adenosyl-L-homocysteine + H(+). The enzyme catalyses uridine(32) in tRNA + S-adenosyl-L-methionine = 2'-O-methyluridine(32) in tRNA + S-adenosyl-L-homocysteine + H(+). The catalysed reaction is adenosine(32) in tRNA + S-adenosyl-L-methionine = 2'-O-methyladenosine(32) in tRNA + S-adenosyl-L-homocysteine + H(+). Functionally, catalyzes the formation of 2'O-methylated cytidine (Cm32), 2'O-methylated uridine (Um32) or 2'O-methylated adenosine (Am32) at position 32 in tRNA. Confers resistance to oxidative stress. The polypeptide is tRNA (cytidine/uridine/adenosine-2'-O-)-methyltransferase TrmJ (Pseudomonas aeruginosa (strain UCBPP-PA14)).